The following is a 247-amino-acid chain: Suppressor of silencing P0 (247 aa).

The F-box-like domain maps to 76–95 (LPRHLHYECLEWGLLCGTHP).

It belongs to the polerovirus P0 protein family.

Suppressor of RNA-mediated gene silencing, also known as post-transcriptional gene silencing (PTGS), a mechanism of plant viral defense that limits the accumulation of viral RNAs. The P0 protein suppresses local PTGS using its F-box-like domain to mediate destabilization and degradation of the AGO1 protein, although not via an interaction with host SKP1A. Participates, together with the proteins P1 and P7, in the inhibition of the induction of aphid-induced host phytohormones. This could play a role in the attraction to the infected plants by aphids. This Potato leafroll virus (strain Potato/Netherlands/Wageningen/1989) (PLrV) protein is Suppressor of silencing P0.